We begin with the raw amino-acid sequence, 138 residues long: ATP synthase epsilon chain (138 aa).

Belongs to the ATPase epsilon chain family. F-type ATPases have 2 components, CF(1) - the catalytic core - and CF(0) - the membrane proton channel. CF(1) has five subunits: alpha(3), beta(3), gamma(1), delta(1), epsilon(1). CF(0) has three main subunits: a, b and c.

The protein resides in the cell membrane. Its function is as follows. Produces ATP from ADP in the presence of a proton gradient across the membrane. The chain is ATP synthase epsilon chain from Streptococcus equi subsp. equi (strain 4047).